Consider the following 240-residue polypeptide: 45 kDa antigen (240 aa).

2 Fibronectin type-III domains span residues 1 to 109 (EFPD…FHTL) and 110 to 210 (ANGT…KSGH).

The chain is 45 kDa antigen from Taenia ovis (Sheep tapeworm).